Here is a 1029-residue protein sequence, read N- to C-terminus: Multiple C2 domain and transmembrane region protein 6 (1029 aa).

Residues 1-111 (MNKLVVEIVD…SGVQRYPLDK (111 aa)) form the C2 1 domain. A disordered region spans residues 187-224 (TKKKEKESRTFHSIGAHAGGGGGAPPMSQAKQAYPPPP). C2 domains lie at 277–398 (RSSG…PQWY), 437–562 (RVSH…PRWF), and 605–727 (FSSD…THFY). 5 residues coordinate Ca(2+): D310, D316, D363, D365, and D371. A run of 2 helical transmembrane segments spans residues 864 to 884 (LILV…LFVI) and 976 to 996 (FALI…AIII).

This sequence belongs to the MCTP family. Requires Ca(2+) as cofactor. As to expression, expressed in the vascular tissues of cotyledons and rosette leaves. Accumulates in roots caps and shoot apical meristems (SAMs). Observed in flowers.

It is found in the cell membrane. The protein resides in the cytoplasm. The protein localises to the endosome membrane. Regulates flowering time under long days. May function as a signaling molecule by regulating the trafficking of other regulators. This Arabidopsis thaliana (Mouse-ear cress) protein is Multiple C2 domain and transmembrane region protein 6.